The following is a 208-amino-acid chain: Histone H1t (208 aa).

The span at 1 to 12 (MSETAPAASSTL) shows a compositional bias: polar residues. Positions 1–39 (MSETAPAASSTLVPAPVEKPSSKRRGKKPGLAPARKPRG) are disordered. Ser-9 is subject to Phosphoserine. An H15 domain is found at 38–111 (RGFSVSKLIP…GASGSFKLSK (74 aa)). Arg-56 is subject to Citrulline. The disordered stretch occupies residues 95 to 208 (LVQTKGTGAS…TDLRKAAGRK (114 aa)). A compositionally biased stretch (basic residues) spans 121–134 (KGKKSASAKAKKMG). Ser-141 carries the phosphoserine modification. A compositionally biased stretch (basic residues) spans 143-154 (KSSKTKAVKKPK). Thr-156 bears the Phosphothreonine mark. Phosphoserine is present on residues Ser-163 and Ser-178. The span at 199–208 (TDLRKAAGRK) shows a compositional bias: basic and acidic residues.

It belongs to the histone H1/H5 family. In terms of processing, phosphorylated in early spermatids. Citrullination at Arg-56 (H1R54ci) by PADI4 takes place within the DNA-binding site of H1 and results in its displacement from chromatin and global chromatin decondensation, thereby promoting pluripotency and stem cell maintenance. Testis-specific.

It is found in the nucleus. The protein localises to the chromosome. Its function is as follows. Testis-specific histone H1 that forms less compacted chromatin compared to other H1 histone subtypes. Formation of more relaxed chromatin may be required to promote chromatin architecture required for proper chromosome regulation during meiosis, such as homologous recombination. Histones H1 act as linkers that bind to nucleosomes and compact polynucleosomes into a higher-order chromatin configuration. This chain is Histone H1t, found in Mus musculus (Mouse).